The chain runs to 379 residues: Queuine tRNA-ribosyltransferase (379 aa).

Asp94 acts as the Proton acceptor in catalysis. Substrate is bound by residues 94–98, Asp148, Gln191, and Gly218; that span reads DSGGF. The interval 249-255 is RNA binding; it reads GVGSPDA. Asp268 acts as the Nucleophile in catalysis. The interval 273-277 is RNA binding; important for wobble base 34 recognition; sequence TRIAR. Zn(2+)-binding residues include Cys306, Cys308, Cys311, and His337.

The protein belongs to the queuine tRNA-ribosyltransferase family. As to quaternary structure, homodimer. Within each dimer, one monomer is responsible for RNA recognition and catalysis, while the other monomer binds to the replacement base PreQ1. Requires Zn(2+) as cofactor.

The enzyme catalyses 7-aminomethyl-7-carbaguanine + guanosine(34) in tRNA = 7-aminomethyl-7-carbaguanosine(34) in tRNA + guanine. It functions in the pathway tRNA modification; tRNA-queuosine biosynthesis. In terms of biological role, catalyzes the base-exchange of a guanine (G) residue with the queuine precursor 7-aminomethyl-7-deazaguanine (PreQ1) at position 34 (anticodon wobble position) in tRNAs with GU(N) anticodons (tRNA-Asp, -Asn, -His and -Tyr). Catalysis occurs through a double-displacement mechanism. The nucleophile active site attacks the C1' of nucleotide 34 to detach the guanine base from the RNA, forming a covalent enzyme-RNA intermediate. The proton acceptor active site deprotonates the incoming PreQ1, allowing a nucleophilic attack on the C1' of the ribose to form the product. After dissociation, two additional enzymatic reactions on the tRNA convert PreQ1 to queuine (Q), resulting in the hypermodified nucleoside queuosine (7-(((4,5-cis-dihydroxy-2-cyclopenten-1-yl)amino)methyl)-7-deazaguanosine). In Staphylococcus aureus (strain bovine RF122 / ET3-1), this protein is Queuine tRNA-ribosyltransferase.